Consider the following 425-residue polypeptide: Serine--tRNA ligase (425 aa).

228-230 (TAE) serves as a coordination point for L-serine. 259-261 (RSE) lines the ATP pocket. L-serine is bound at residue E282. ATP is bound at residue 346 to 349 (EIAS). S382 serves as a coordination point for L-serine.

The protein belongs to the class-II aminoacyl-tRNA synthetase family. Type-1 seryl-tRNA synthetase subfamily. In terms of assembly, homodimer. The tRNA molecule binds across the dimer.

It is found in the cytoplasm. The catalysed reaction is tRNA(Ser) + L-serine + ATP = L-seryl-tRNA(Ser) + AMP + diphosphate + H(+). It carries out the reaction tRNA(Sec) + L-serine + ATP = L-seryl-tRNA(Sec) + AMP + diphosphate + H(+). It participates in aminoacyl-tRNA biosynthesis; selenocysteinyl-tRNA(Sec) biosynthesis; L-seryl-tRNA(Sec) from L-serine and tRNA(Sec): step 1/1. Its function is as follows. Catalyzes the attachment of serine to tRNA(Ser). Is also able to aminoacylate tRNA(Sec) with serine, to form the misacylated tRNA L-seryl-tRNA(Sec), which will be further converted into selenocysteinyl-tRNA(Sec). In Rickettsia prowazekii (strain Madrid E), this protein is Serine--tRNA ligase.